The primary structure comprises 198 residues: Nucleoid occlusion factor SlmA (198 aa).

Residues 10 to 70 (NRREEILQSL…SLIEFIEDSL (61 aa)) form the HTH tetR-type domain. A DNA-binding region (H-T-H motif) is located at residues 33–52 (TTAKLAASVGVSEAALYRHF). Positions 117 to 144 (EQDRLQGRINQLFERIEAQLRQVLREKR) form a coiled coil.

Belongs to the nucleoid occlusion factor SlmA family. As to quaternary structure, homodimer. Interacts with FtsZ.

It is found in the cytoplasm. Its subcellular location is the nucleoid. In terms of biological role, required for nucleoid occlusion (NO) phenomenon, which prevents Z-ring formation and cell division over the nucleoid. Acts as a DNA-associated cell division inhibitor that binds simultaneously chromosomal DNA and FtsZ, and disrupts the assembly of FtsZ polymers. SlmA-DNA-binding sequences (SBS) are dispersed on non-Ter regions of the chromosome, preventing FtsZ polymerization at these regions. The polypeptide is Nucleoid occlusion factor SlmA (Citrobacter koseri (strain ATCC BAA-895 / CDC 4225-83 / SGSC4696)).